We begin with the raw amino-acid sequence, 183 residues long: Large ribosomal subunit protein uL6 (183 aa).

Belongs to the universal ribosomal protein uL6 family. In terms of assembly, part of the 50S ribosomal subunit.

This protein binds to the 23S rRNA, and is important in its secondary structure. It is located near the subunit interface in the base of the L7/L12 stalk, and near the tRNA binding site of the peptidyltransferase center. The protein is Large ribosomal subunit protein uL6 of Ruminiclostridium cellulolyticum (strain ATCC 35319 / DSM 5812 / JCM 6584 / H10) (Clostridium cellulolyticum).